A 160-amino-acid polypeptide reads, in one-letter code: Large ribosomal subunit protein bL19 (160 aa).

Belongs to the bacterial ribosomal protein bL19 family.

In terms of biological role, this protein is located at the 30S-50S ribosomal subunit interface and may play a role in the structure and function of the aminoacyl-tRNA binding site. The sequence is that of Large ribosomal subunit protein bL19 from Prochlorococcus marinus subsp. pastoris (strain CCMP1986 / NIES-2087 / MED4).